The primary structure comprises 204 residues: Probable nicotinate-nucleotide adenylyltransferase (204 aa).

The protein belongs to the NadD family.

It catalyses the reaction nicotinate beta-D-ribonucleotide + ATP + H(+) = deamido-NAD(+) + diphosphate. The protein operates within cofactor biosynthesis; NAD(+) biosynthesis; deamido-NAD(+) from nicotinate D-ribonucleotide: step 1/1. Its function is as follows. Catalyzes the reversible adenylation of nicotinate mononucleotide (NaMN) to nicotinic acid adenine dinucleotide (NaAD). The sequence is that of Probable nicotinate-nucleotide adenylyltransferase from Dehalococcoides mccartyi (strain CBDB1).